A 340-amino-acid chain; its full sequence is MYQIVIETEDGETCRRMRPSEDWISRAEAERNLLASCRAGCATCKADCTDGDYELIDVKVQAVPPDEEEDGKVLLCRTFPRSDLHLLVPYTYDRISFEAIQTNWLAEILACDRVSSNVVRLVLQRSRPMAARISLNFVPGQFVDIEIPGTHTRRSYSMASVAEDGQLEFIIRLLPDGAFSKFLQTEAKVGMRVDLRGPAGSFFLHDHGGRSRVFVAGGTGLSPVLSMIRQLGKASDPSPATLLFGVTNREELFYVDELKTLAQSMPTLGVRIAVVNDDGGNGVDKGTVIDLLRAELEIDLLLGHARRRRRRETARSCREDHRDRCPAWRSDFLEKFLASG.

The 92-residue stretch at 1–92 (MYQIVIETED…DLHLLVPYTY (92 aa)) folds into the 2Fe-2S ferredoxin-type domain. [2Fe-2S] cluster contacts are provided by cysteine 37, cysteine 41, cysteine 44, and cysteine 76. The FAD-binding FR-type domain occupies 101-205 (QTNWLAEILA…RGPAGSFFLH (105 aa)). 215 to 229 (VAGGTGLSPVLSMIR) is a binding site for FAD.

As to quaternary structure, the soluble methane monooxygenase (sMMO) consists of four components A/MMOH (composed of alpha/MmoX, beta/MmoY and gamma/MmoZ), B/MMOB (MmoB), C/MMOR (MmoC) and D/MMOD (MmoD). [2Fe-2S] cluster is required as a cofactor.

The enzyme catalyses methane + NADH + O2 + H(+) = methanol + NAD(+) + H2O. The catalysed reaction is methane + NADPH + O2 + H(+) = methanol + NADP(+) + H2O. Functionally, responsible for the initial oxygenation of methane to methanol in methanotrophs. It also catalyzes the monohydroxylation of a variety of unactivated alkenes, alicyclic, aromatic and heterocyclic compounds. The component C is the iron-sulfur flavoprotein of sMMO. The chain is Methane monooxygenase component C (mmoC) from Methylosinus trichosporium.